Reading from the N-terminus, the 143-residue chain is Transcriptional regulator MraZ (143 aa).

SpoVT-AbrB domains lie at 5-47 and 76-119; these read EYEH…PRGV and AADM…SPRR.

It belongs to the MraZ family. As to quaternary structure, forms oligomers.

The protein localises to the cytoplasm. The protein resides in the nucleoid. In Roseiflexus castenholzii (strain DSM 13941 / HLO8), this protein is Transcriptional regulator MraZ.